The chain runs to 349 residues: Hydroxymethylglutaryl-CoA synthase (349 aa).

Positions 29 and 30 each coordinate (3S)-3-hydroxy-3-methylglutaryl-CoA. Residue E81 is the Proton donor/acceptor of the active site. Residues C113 and T154 each contribute to the (3S)-3-hydroxy-3-methylglutaryl-CoA site. Residue C113 is the Acyl-thioester intermediate of the active site. R202 is a CoA binding site. (3S)-3-hydroxy-3-methylglutaryl-CoA-binding residues include T204 and H237. The Proton donor/acceptor role is filled by H237. A CoA-binding site is contributed by K242. Positions 246, 269, and 299 each coordinate (3S)-3-hydroxy-3-methylglutaryl-CoA.

Belongs to the thiolase-like superfamily. Archaeal HMG-CoA synthase family. In terms of assembly, interacts with acetoacetyl-CoA thiolase that catalyzes the precedent step in the pathway and with a DUF35 protein. The acetoacetyl-CoA thiolase/HMG-CoA synthase complex channels the intermediate via a fused CoA-binding site, which allows for efficient coupling of the endergonic thiolase reaction with the exergonic HMGCS reaction.

It catalyses the reaction acetoacetyl-CoA + acetyl-CoA + H2O = (3S)-3-hydroxy-3-methylglutaryl-CoA + CoA + H(+). The protein operates within metabolic intermediate biosynthesis; (R)-mevalonate biosynthesis; (R)-mevalonate from acetyl-CoA: step 2/3. Functionally, catalyzes the condensation of acetyl-CoA with acetoacetyl-CoA to form 3-hydroxy-3-methylglutaryl-CoA (HMG-CoA). Functions in the mevalonate (MVA) pathway leading to isopentenyl diphosphate (IPP), a key precursor for the biosynthesis of isoprenoid compounds that are building blocks of archaeal membrane lipids. This chain is Hydroxymethylglutaryl-CoA synthase, found in Methanosarcina barkeri (strain Fusaro / DSM 804).